The following is a 363-amino-acid chain: Pyrimidine monooxygenase RutA (363 aa).

Residues 49-50 (IK), Asn115, Glu124, 140-141 (RY), and Ser190 contribute to the FMN site.

Belongs to the NtaA/SnaA/DszA monooxygenase family. RutA subfamily.

The enzyme catalyses uracil + FMNH2 + NADH + O2 = (Z)-3-ureidoacrylate + FMN + NAD(+) + H2O + H(+). It carries out the reaction thymine + FMNH2 + NADH + O2 = (Z)-2-methylureidoacrylate + FMN + NAD(+) + H2O + H(+). In terms of biological role, catalyzes the pyrimidine ring opening between N-3 and C-4 by an unusual flavin hydroperoxide-catalyzed mechanism, adding oxygen atoms in the process to yield ureidoacrylate peracid, that immediately reacts with FMN forming ureidoacrylate and FMN-N(5)-oxide. The FMN-N(5)-oxide reacts spontaneously with NADH to produce FMN. Requires the flavin reductase RutF to regenerate FMN in vivo. The chain is Pyrimidine monooxygenase RutA from Escherichia coli O103:H2 (strain 12009 / EHEC).